Here is a 230-residue protein sequence, read N- to C-terminus: UPF0173 metal-dependent hydrolase RHOS4_08540 (230 aa).

This sequence belongs to the UPF0173 family.

This Cereibacter sphaeroides (strain ATCC 17023 / DSM 158 / JCM 6121 / CCUG 31486 / LMG 2827 / NBRC 12203 / NCIMB 8253 / ATH 2.4.1.) (Rhodobacter sphaeroides) protein is UPF0173 metal-dependent hydrolase RHOS4_08540.